A 1012-amino-acid polypeptide reads, in one-letter code: Roundabout homolog 4 (1012 aa).

Residues 1–27 form the signal peptide; it reads MGSGGTGLLGTEWPLPLLLLFIMGGEA. Ig-like C2-type domains are found at residues 32 to 132 and 138 to 225; these read PQIL…ARLS and EDFQ…ARVS. 2 disulfides stabilise this stretch: Cys53–Cys115 and Cys159–Cys208. N-linked (GlcNAc...) asparagine glycosylation is found at Asn201 and Asn247. Fibronectin type-III domains follow at residues 249–346 and 348–443; these read TLLN…LPEQ and PSAP…LEQA. Asn361, Asn390, and Asn397 each carry an N-linked (GlcNAc...) asparagine glycan. Disordered stretches follow at residues 533 to 553 and 586 to 616; these read TSGS…GLDP and LIAE…AGTS. Residues 534-550 are compositionally biased toward low complexity; the sequence is SGSRDLSSSSSLSSRLG. A compositionally biased stretch (pro residues) spans 592-601; sequence SSPPVRPSPK. 2 N-linked (GlcNAc...) asparagine glycosylation sites follow: Asn681 and Asn713. A disordered region spans residues 711-801; the sequence is HRNSSELASR…LEEEEDQDSV (91 aa). The span at 745-759 shows a compositional bias: low complexity; it reads LQAPSSDPLPAAPLS. Positions 760–771 are enriched in polar residues; that stretch reads VLNSSRPSSPQA. Residues Asn762 and Asn783 are each glycosylated (N-linked (GlcNAc...) asparagine). Over residues 772 to 791 the composition is skewed to low complexity; the sequence is SFLSCPSPSSSNLSSSSLSS. A phosphoserine mark is found at Ser814 and Ser947. A disordered region spans residues 980 to 1012; sequence RLGRGLPPWPPDSRASSQRSWLTGAVPKAGDSS.

It belongs to the immunoglobulin superfamily. ROBO family. As to quaternary structure, interacts with SLIT2 and ENAH. As to expression, expressed specifically in embryo and adult vascular endothelium.

Its function is as follows. Receptor for Slit proteins, at least for SLIT2, and seems to be involved in angiogenesis and vascular patterning. May mediate the inhibition of primary endothelial cell migration by Slit proteins. Involved in the maintenance of endothelial barrier organization and function. The chain is Roundabout homolog 4 (Robo4) from Mus musculus (Mouse).